Consider the following 285-residue polypeptide: Casein kinase II subunit beta-2 (285 aa).

Residues 226-285 form a disordered region; it reads FKDAEDEAELDDDDEEEEEEEEEEEELAAMDEAEGAQQQHAAAAAGTATGGVAAGGEGVH. Residues 229 to 259 are compositionally biased toward acidic residues; that stretch reads AEDEAELDDDDEEEEEEEEEEEELAAMDEAE. A compositionally biased stretch (low complexity) spans 260 to 272; the sequence is GAQQQHAAAAAGT. Residues 273–285 show a composition bias toward gly residues; the sequence is ATGGVAAGGEGVH.

The protein belongs to the casein kinase 2 subunit beta family. As to quaternary structure, tetramer composed of two alpha chains, one beta chain and one beta' chain. Phosphorylated by alpha subunit.

In terms of biological role, regulatory subunit of casein kinase II/CK2. As part of the kinase complex regulates the basal catalytic activity of the alpha subunit a constitutively active serine/threonine-protein kinase that phosphorylates a large number of substrates containing acidic residues C-terminal to the phosphorylated serine or threonine. The chain is Casein kinase II subunit beta-2 (ckb-2) from Neurospora crassa (strain ATCC 24698 / 74-OR23-1A / CBS 708.71 / DSM 1257 / FGSC 987).